The following is a 971-amino-acid chain: MELSEGNLQGLTEYLKKTLDPDPAVRRPAEKYLESVEGNQNYPLLLLTLVERSQDNVIKVCSAVTFKNYIKRNWRIVEDESNKICEADRIAVKSSIINLMLRSPEQIQKQLSDAISIIGREDFPQKWPNLLTEMVNRFQSGDFHVINGVLHTAHSLFKRYRHEFKSSELWTEIKLVLDTFAGPLTDLFKATIELCNTHANDVGALKVLFSSLNLIAKLFHSLNFQDLPEFFEDNMETWMTNFHNLLTLDNKLLQTDDEEEAGLLELLKSQICDNAALYAQKYDEEFQPYLPRFVTAIWNLLVTTGQEVKYDLLVSNAIQFLASVCERPHYKNLFEDPSTLTSICEKVIVPNMEFRAADEEAFEDNSEEYIRRDLEGSDIDTRRRAACDLVRGLCKFFEGPVTNIFSGYVNSMLQEYAKNPSVNWKHKDAAIYLVTSLASKAQTQKHGITQANELVNLTEFFVNHILPDLKSANINQYPVLKADGIKYIMFFRSQIPREQLLVTIPLLIAYLQAESIVVHTYAAHALERFFTMKGAATTTLIVAADMMPYVELLLANLFKALSLPGSTENEYIMKAIMRSFSLLQEAIIPYIPSVISQLTQKLLAVSKNPSKPHFNHYMFEAICLSIRITCRANPAAVASFEDALFLVFTEILQSDVQEFIPYVFQVMSLLLEIHTTDIPPSYMALFPHLLQPVLWERTGNIPPLVRLLQAYLERGATTIAASASDKIPGLLGVFQKLIASKANDHQGFYLLNSIIEHLPAECIEQYKRQIFIVLFQRLQSSKTTKFVKSFLVFLNLFCIKFGAIALQEMFDSIQPKMFGMVVEKIIIPEIQKVSGPIEKKICAVGLTKVLTECPVMMDTEYTKLWTPLLQALIGLFELPEDDTIPDDEHFIDIEDTPGYQAAFSQLAFAGKKEHDPIGEMVNNPKILLAQSLHKLSTACPGRVPSMISTSLNAEALQFLQGYLQAGSVSLV.

An Importin N-terminal domain is found at Ala29 to Arg102.

It belongs to the XPO2/CSE1 family.

The protein localises to the cytoplasm. Its subcellular location is the nucleus. Functionally, export receptor for importin alpha. Mediates importin-alpha re-export from the nucleus to the cytoplasm after import substrates have been released into the nucleoplasm. The chain is Exportin-2 (cse1l) from Xenopus laevis (African clawed frog).